A 197-amino-acid polypeptide reads, in one-letter code: 3-isopropylmalate dehydratase small subunit (197 aa).

This sequence belongs to the LeuD family. LeuD type 1 subfamily. As to quaternary structure, heterodimer of LeuC and LeuD.

It catalyses the reaction (2R,3S)-3-isopropylmalate = (2S)-2-isopropylmalate. Its pathway is amino-acid biosynthesis; L-leucine biosynthesis; L-leucine from 3-methyl-2-oxobutanoate: step 2/4. Functionally, catalyzes the isomerization between 2-isopropylmalate and 3-isopropylmalate, via the formation of 2-isopropylmaleate. This Geobacillus kaustophilus (strain HTA426) protein is 3-isopropylmalate dehydratase small subunit.